The sequence spans 527 residues: CTP synthase (527 aa).

Positions 1–270 (MKYIFVTGGV…ADVLCQLLQL (270 aa)) are amidoligase domain. Residue S12 coordinates CTP. S12 contributes to the UTP binding site. ATP contacts are provided by residues 13-18 (GLGKGI) and D70. Residues D70 and E145 each coordinate Mg(2+). CTP-binding positions include 152–154 (DIE), 191–196 (KTKPTQ), and K227. UTP-binding positions include 191–196 (KTKPTQ) and K227. Residues 292 to 525 (TIGIVSKYGK…VEACLKNRGK (234 aa)) form the Glutamine amidotransferase type-1 domain. G349 contributes to the L-glutamine binding site. C376 (nucleophile; for glutamine hydrolysis) is an active-site residue. Residues 377–380 (LGFQ), E400, and R455 each bind L-glutamine. Residues H498 and E500 contribute to the active site.

The protein belongs to the CTP synthase family. Homotetramer.

It catalyses the reaction UTP + L-glutamine + ATP + H2O = CTP + L-glutamate + ADP + phosphate + 2 H(+). The enzyme catalyses L-glutamine + H2O = L-glutamate + NH4(+). The catalysed reaction is UTP + NH4(+) + ATP = CTP + ADP + phosphate + 2 H(+). It participates in pyrimidine metabolism; CTP biosynthesis via de novo pathway; CTP from UDP: step 2/2. With respect to regulation, allosterically activated by GTP, when glutamine is the substrate; GTP has no effect on the reaction when ammonia is the substrate. The allosteric effector GTP functions by stabilizing the protein conformation that binds the tetrahedral intermediate(s) formed during glutamine hydrolysis. Inhibited by the product CTP, via allosteric rather than competitive inhibition. Functionally, catalyzes the ATP-dependent amination of UTP to CTP with either L-glutamine or ammonia as the source of nitrogen. Regulates intracellular CTP levels through interactions with the four ribonucleotide triphosphates. The polypeptide is CTP synthase (Methanospirillum hungatei JF-1 (strain ATCC 27890 / DSM 864 / NBRC 100397 / JF-1)).